The following is a 298-amino-acid chain: Glycine--tRNA ligase alpha subunit (298 aa).

Belongs to the class-II aminoacyl-tRNA synthetase family. Tetramer of two alpha and two beta subunits.

The protein resides in the cytoplasm. The enzyme catalyses tRNA(Gly) + glycine + ATP = glycyl-tRNA(Gly) + AMP + diphosphate. The sequence is that of Glycine--tRNA ligase alpha subunit from Neisseria meningitidis serogroup C / serotype 2a (strain ATCC 700532 / DSM 15464 / FAM18).